We begin with the raw amino-acid sequence, 312 residues long: Olfactory receptor 6C75 (312 aa).

At 1 to 23 (MRNSTAVTDFILLGLTSDPQWQV) the chain is on the extracellular side. Asparagine 3 carries an N-linked (GlcNAc...) asparagine glycan. The helical transmembrane segment at 24–44 (VLFIFLLVTYMLSVTGNLIII) threads the bilayer. At 45-63 (TLTLSDPHLQTPMYFFLRN) the chain is on the cytoplasmic side. A helical membrane pass occupies residues 64-84 (FSFLEISFTSVCIPRFLVTVV). Residues 85–95 (TGNRTISYNGC) lie on the Extracellular side of the membrane. Residues cysteine 95 and cysteine 177 are joined by a disulfide bond. Residues 96-116 (VAQLFFFIFLGVTEFYLLAAM) form a helical membrane-spanning segment. At 117–140 (SYDRCMAICKPLHYTIIMSTRVCT) the chain is on the cytoplasmic side. Residues 141-161 (LLVFSSWLAGFLIIFPPVMLL) form a helical membrane-spanning segment. The Extracellular portion of the chain corresponds to 162–194 (LQLDFCASNVIDHFICDSSPMLQLSCTNTHFLE). The helical transmembrane segment at 195–215 (LMAFFLAVVTLMVTLTLVILS) threads the bilayer. At 216 to 237 (YTNIIRTILKIPSMSQRKKAFS) the chain is on the cytoplasmic side. A helical transmembrane segment spans residues 238–258 (TCSSHMIVVSISYSSCIFMYI). Residues 259–269 (KTSARERVTLS) are Extracellular-facing. Residues 270–290 (KGVAVLNTSVAPLLNPFIYTL) traverse the membrane as a helical segment. The Cytoplasmic portion of the chain corresponds to 291-312 (RNKQVKQAFKSMVQKMIFSLNK).

This sequence belongs to the G-protein coupled receptor 1 family.

It is found in the cell membrane. Functionally, odorant receptor. This is Olfactory receptor 6C75 (OR6C75) from Homo sapiens (Human).